Consider the following 201-residue polypeptide: Ribonuclease HII (201 aa).

In terms of domain architecture, RNase H type-2 spans 12–201; the sequence is DLVAGVDEVG…VRELLDVSVQ (190 aa). Residues D18, E19, and D110 each contribute to the a divalent metal cation site.

It belongs to the RNase HII family. Requires Mn(2+) as cofactor. Mg(2+) serves as cofactor.

It is found in the cytoplasm. It carries out the reaction Endonucleolytic cleavage to 5'-phosphomonoester.. In terms of biological role, endonuclease that specifically degrades the RNA of RNA-DNA hybrids. This chain is Ribonuclease HII, found in Pseudomonas aeruginosa (strain ATCC 15692 / DSM 22644 / CIP 104116 / JCM 14847 / LMG 12228 / 1C / PRS 101 / PAO1).